A 333-amino-acid polypeptide reads, in one-letter code: Fructose-1,6-bisphosphatase class 1 (333 aa).

E92, D113, L115, and D116 together coordinate Mg(2+). Substrate contacts are provided by residues D116 to S119, N209, Y242, and K272. E278 is a Mg(2+) binding site.

Belongs to the FBPase class 1 family. In terms of assembly, homotetramer. Mg(2+) serves as cofactor.

It localises to the cytoplasm. The enzyme catalyses beta-D-fructose 1,6-bisphosphate + H2O = beta-D-fructose 6-phosphate + phosphate. It participates in carbohydrate biosynthesis; Calvin cycle. This Chlorobaculum tepidum (strain ATCC 49652 / DSM 12025 / NBRC 103806 / TLS) (Chlorobium tepidum) protein is Fructose-1,6-bisphosphatase class 1.